A 206-amino-acid polypeptide reads, in one-letter code: Large ribosomal subunit protein uL4 (206 aa).

The tract at residues A43–S78 is disordered. The span at K49–H58 shows a compositional bias: basic and acidic residues. Residues T59 to G70 show a composition bias toward basic residues.

Belongs to the universal ribosomal protein uL4 family. Part of the 50S ribosomal subunit.

Functionally, one of the primary rRNA binding proteins, this protein initially binds near the 5'-end of the 23S rRNA. It is important during the early stages of 50S assembly. It makes multiple contacts with different domains of the 23S rRNA in the assembled 50S subunit and ribosome. In terms of biological role, forms part of the polypeptide exit tunnel. The sequence is that of Large ribosomal subunit protein uL4 from Cupriavidus pinatubonensis (strain JMP 134 / LMG 1197) (Cupriavidus necator (strain JMP 134)).